The chain runs to 397 residues: Ribosomal RNA large subunit methyltransferase I (397 aa).

The region spanning 2 to 79 (SASIYLVKGR…KEETVDLDFF (78 aa)) is the PUA domain.

It belongs to the methyltransferase superfamily. RlmI family.

The protein localises to the cytoplasm. It catalyses the reaction cytidine(1962) in 23S rRNA + S-adenosyl-L-methionine = 5-methylcytidine(1962) in 23S rRNA + S-adenosyl-L-homocysteine + H(+). Functionally, specifically methylates the cytosine at position 1962 (m5C1962) of 23S rRNA. The sequence is that of Ribosomal RNA large subunit methyltransferase I from Aeromonas hydrophila subsp. hydrophila (strain ATCC 7966 / DSM 30187 / BCRC 13018 / CCUG 14551 / JCM 1027 / KCTC 2358 / NCIMB 9240 / NCTC 8049).